A 215-amino-acid chain; its full sequence is Probable GTP-binding protein EngB (215 aa).

Residues 30-204 (EGLEVAFAGR…QMVLAQWLGL (175 aa)) enclose the EngB-type G domain. Residues 38–45 (GRSNAGKS), 64–68 (GRTQL), 82–85 (DLPG), 149–152 (TKAD), and 182–185 (LFSA) each bind GTP. The Mg(2+) site is built by Ser45 and Thr66.

Belongs to the TRAFAC class TrmE-Era-EngA-EngB-Septin-like GTPase superfamily. EngB GTPase family. It depends on Mg(2+) as a cofactor.

Its function is as follows. Necessary for normal cell division and for the maintenance of normal septation. In Pseudomonas paraeruginosa (strain DSM 24068 / PA7) (Pseudomonas aeruginosa (strain PA7)), this protein is Probable GTP-binding protein EngB.